We begin with the raw amino-acid sequence, 469 residues long: 3-isopropylmalate dehydratase large subunit (469 aa).

[4Fe-4S] cluster is bound by residues Cys347, Cys408, and Cys411.

This sequence belongs to the aconitase/IPM isomerase family. LeuC type 1 subfamily. Heterodimer of LeuC and LeuD. It depends on [4Fe-4S] cluster as a cofactor.

The enzyme catalyses (2R,3S)-3-isopropylmalate = (2S)-2-isopropylmalate. It functions in the pathway amino-acid biosynthesis; L-leucine biosynthesis; L-leucine from 3-methyl-2-oxobutanoate: step 2/4. Catalyzes the isomerization between 2-isopropylmalate and 3-isopropylmalate, via the formation of 2-isopropylmaleate. This is 3-isopropylmalate dehydratase large subunit from Actinobacillus succinogenes (strain ATCC 55618 / DSM 22257 / CCUG 43843 / 130Z).